Reading from the N-terminus, the 1257-residue chain is Protein flightless-1 homolog (1257 aa).

LRR repeat units lie at residues Leu-6–Met-31, Thr-32–Cys-54, Asn-56–Leu-77, Pro-78–Met-102, Lys-103–Lys-126, Ser-128–Asn-148, Leu-149–Leu-172, Met-174–Ser-195, Thr-197–Met-221, His-222–Leu-244, Asn-246–Trp-267, Glu-268–Leu-290, Arg-292–Leu-315, Ile-316–Cys-338, Val-339–Leu-361, and Asp-363–Ala-384. Gelsolin-like repeat units follow at residues Met-523–Leu-600, Ala-640–Trp-714, Glu-759–Arg-832, and Glu-1168–Arg-1243.

This sequence belongs to the villin/gelsolin family.

Its function is as follows. May play a key role in embryonic cellularization by interacting with both the cytoskeleton and other cellular components. This Caenorhabditis elegans protein is Protein flightless-1 homolog (fli-1).